The chain runs to 62 residues: Sauvatide (62 aa).

The first 24 residues, 1–24 (MDILKKSLFLILFLGLVSISFCDG), serve as a signal peptide directing secretion. Positions 25–46 (EKRQDDDEANESEEKKEIHEVE) are excised as a propeptide. Position 58 is a lysine amide (lysine 58).

In terms of tissue distribution, expressed by the skin glands.

It localises to the secreted. Its function is as follows. Induces contraction of smooth muscle in isolated rat urinary bladder with an EC(50) value of 2.2nM. This chain is Sauvatide, found in Phyllomedusa sauvagei (Sauvage's leaf frog).